We begin with the raw amino-acid sequence, 306 residues long: Polyisoprenyl-teichoic acid--peptidoglycan teichoic acid transferase TagU (306 aa).

Residues 1–11 (MRNERRKKKKT) are Cytoplasmic-facing. A helical; Signal-anchor for type II membrane protein transmembrane segment spans residues 12-32 (LLLTILTIIGLLVLGTGGYAY). At 33 to 306 (YLWHKAASTV…TKELKESLEK (274 aa)) the chain is on the extracellular side.

It belongs to the LytR/CpsA/Psr (LCP) family. In terms of assembly, interacts with MreB. Interacts with FloT.

The protein resides in the cell membrane. It is found in the membrane raft. It functions in the pathway cell wall biogenesis. May catalyze the final step in cell wall teichoic acid biosynthesis, the transfer of the anionic cell wall polymers (APs) from their lipid-linked precursor to the cell wall peptidoglycan (PG). The sequence is that of Polyisoprenyl-teichoic acid--peptidoglycan teichoic acid transferase TagU from Bacillus subtilis (strain 168).